We begin with the raw amino-acid sequence, 247 residues long: ATP synthase subunit a, chloroplastic (247 aa).

The next 5 membrane-spanning stretches (helical) occupy residues 38-58 (QVLI…IIAV), 95-115 (VPFI…GALL), 134-154 (INTT…AGLS), 199-219 (LVVV…VMFL), and 220-240 (GLFT…AYIG).

The protein belongs to the ATPase A chain family. As to quaternary structure, F-type ATPases have 2 components, CF(1) - the catalytic core - and CF(0) - the membrane proton channel. CF(1) has five subunits: alpha(3), beta(3), gamma(1), delta(1), epsilon(1). CF(0) has four main subunits: a, b, b' and c.

It is found in the plastid. Its subcellular location is the chloroplast thylakoid membrane. Functionally, key component of the proton channel; it plays a direct role in the translocation of protons across the membrane. The polypeptide is ATP synthase subunit a, chloroplastic (Cucumis sativus (Cucumber)).